Consider the following 665-residue polypeptide: MTITRHAQIDWDEHGNPRSRDFSDVYFSTESGLEETRHVFLVQNDLRRRFTELQDGGRLIIGETGFGTGLNFLCAWQLFDECAPANARLQFVSVEKYPLSHADLQRALALWPELSPFAGQLLDQYVAVHEGFQRLVFAGGRVTLTLLIGDALQMLPQLDGQMDAWFLDGFAPAKNPEMWTPELFAELARLSTSSTTIGTFTSTGWVRRSLNAAGFKMKRVPGIGHKWEVLRGTFIAWPEDVAHPPAAKPWLARPAPIGGERKALVIGAGLAGCATAQSLAQRGWQVSLLERHAAPAQEASGNPQGVLYLKLSAHGTALSQLILSGFGHTRRLLERLQRGVDWDACGVLQLTFDDKEALRQKQLADAFPESLLHLLDKPAAEAQSGVALNSGGLFYPEGGWVHPPALCHAQAAHANIRLIAHQQALELRRVDDQWQVWSEEQLVDSAPVVVLAGAADIQQFSQSADLPLKRIRGQITRLPQTQASTALRSVVCAEGYVAPARLGEHTLGASFDFNSTDLTPNLADHLDNLGLLREISEDLTSRLDTADLSPEQLQGRAAFRCTSPDYLPIVGPLADREAFMQAYAALGKDARQVPDITCPWLDGLYVNSGHGSRGLITAPLCGELIAAWLDNEPLPLPRSVAEACHPNRFALRGLIRGKGKQTVGH.

The tract at residues 1-235 is tRNA (mnm(5)s(2)U34)-methyltransferase; that stretch reads MTITRHAQID…KWEVLRGTFI (235 aa). The segment at 266-665 is FAD-dependent cmnm(5)s(2)U34 oxidoreductase; the sequence is IGAGLAGCAT…RGKGKQTVGH (400 aa).

It in the N-terminal section; belongs to the methyltransferase superfamily. tRNA (mnm(5)s(2)U34)-methyltransferase family. This sequence in the C-terminal section; belongs to the DAO family. Requires FAD as cofactor.

Its subcellular location is the cytoplasm. It carries out the reaction 5-aminomethyl-2-thiouridine(34) in tRNA + S-adenosyl-L-methionine = 5-methylaminomethyl-2-thiouridine(34) in tRNA + S-adenosyl-L-homocysteine + H(+). Catalyzes the last two steps in the biosynthesis of 5-methylaminomethyl-2-thiouridine (mnm(5)s(2)U) at the wobble position (U34) in tRNA. Catalyzes the FAD-dependent demodification of cmnm(5)s(2)U34 to nm(5)s(2)U34, followed by the transfer of a methyl group from S-adenosyl-L-methionine to nm(5)s(2)U34, to form mnm(5)s(2)U34. The protein is tRNA 5-methylaminomethyl-2-thiouridine biosynthesis bifunctional protein MnmC of Pseudomonas syringae pv. syringae (strain B728a).